A 299-amino-acid polypeptide reads, in one-letter code: Anti-sigma-D factor RsdA (299 aa).

Residues 86-106 (LAAVGSVAAALLVLSGFGAVV) form a helical membrane-spanning segment. Positions 187–299 (NTKVETRDPN…APETPVSPTH (113 aa)) are disordered. Low complexity-rich tracts occupy residues 201 to 212 (PGSPSNPAAPGS) and 250 to 271 (PNST…EPGS).

As to quaternary structure, interacts with ECF RNA polymerase sigma factor SigD; this should inhibit the interaction of SigD with the RNA polymerase catalytic core. Post-translationally, the cytosolic fragment is degraded by a ClpP1-ClpP2-ClpX complex, as would be expected after S1P and S2P intramembrane proteolysis. This releases SigD so that it may bind to the RNA polymerase catalytic core.

It localises to the cell membrane. An anti-sigma factor for extracytoplasmic function (ECF) sigma factor SigD. ECF sigma factors are held in an inactive form by an anti-sigma factor until released by regulated intramembrane proteolysis (RIP). RIP occurs when an extracytoplasmic signal triggers a concerted proteolytic cascade to transmit information and elicit cellular responses. The membrane-spanning regulatory substrate protein is first cut extracytoplasmically (site-1 protease, S1P), then within the membrane itself (site-2 protease, S2P), while cytoplasmic proteases finish degrading the regulatory protein, liberating the sigma factor. Neither S1P nor S2P proteases have been so far identified for this anti-sigma factor. This is Anti-sigma-D factor RsdA (rsda) from Mycobacterium bovis (strain ATCC BAA-935 / AF2122/97).